We begin with the raw amino-acid sequence, 272 residues long: Putative phosphoenolpyruvate synthase regulatory protein (272 aa).

Gly-152–Thr-159 lines the ADP pocket.

It belongs to the pyruvate, phosphate/water dikinase regulatory protein family. PSRP subfamily.

It catalyses the reaction [pyruvate, water dikinase] + ADP = [pyruvate, water dikinase]-phosphate + AMP + H(+). It carries out the reaction [pyruvate, water dikinase]-phosphate + phosphate + H(+) = [pyruvate, water dikinase] + diphosphate. Its function is as follows. Bifunctional serine/threonine kinase and phosphorylase involved in the regulation of the phosphoenolpyruvate synthase (PEPS) by catalyzing its phosphorylation/dephosphorylation. The protein is Putative phosphoenolpyruvate synthase regulatory protein of Pseudomonas putida (strain ATCC 47054 / DSM 6125 / CFBP 8728 / NCIMB 11950 / KT2440).